Reading from the N-terminus, the 619-residue chain is TOX high mobility group box family member 4 (619 aa).

Disordered regions lie at residues 155-227 (LSLG…QKPV) and 306-335 (DPVP…TESP). Position 176 is a phosphothreonine (Thr-176). Ser-178 and Ser-182 each carry phosphoserine. A compositionally biased stretch (basic and acidic residues) spans 183 to 193 (LHEDGVDDFRR). The segment covering 208 to 218 (KQKAPKKRKKK) has biased composition (basic residues). The short motif at 213 to 218 (KKRKKK) is the Nuclear localization signal element. Positions 223–291 (PQKPVSAYAL…EYLKALAAYK (69 aa)) form a DNA-binding region, HMG box. Thr-313 bears the Phosphothreonine mark. Position 315 is a phosphoserine (Ser-315). Residues 320–335 (TAADPASPAPASTESP) show a composition bias toward low complexity. The residue at position 479 (Arg-479) is an Asymmetric dimethylarginine. A phosphoserine mark is found at Ser-531, Ser-548, Ser-550, Ser-558, Ser-560, and Ser-565.

As to quaternary structure, component of the PNUTS-PP1 phosphatase complex, composed of PPP1R10/PNUTS, TOX4, WDR82 and PPP1CA or PPP1CB or PPP1CC. Interacts with PPP1R10/PNUTS. Interacts with FOXO1 and CREB1 (increased by cAMP); FOXO1 and CREB1 are required for full induction of TOX4-dependent activity and the interactions are inhibited by insulin.

It is found in the nucleus. The protein resides in the chromosome. With respect to regulation, in liver, recruited to target gene promoters following treatment with dexamethasone and cAMP. Binding is decreased in presence of insulin. Its function is as follows. Transcription factor that modulates cell fate reprogramming from the somatic state to the pluripotent and neuronal fate. In liver, controls the expression of hormone-regulated gluconeogenic genes such as G6PC1 and PCK1. This regulation is independent of the insulin receptor activation. Also acts as a regulatory component of protein phosphatase 1 (PP1) complexes. Component of the PNUTS-PP1 protein phosphatase complex, a PP1 complex that regulates RNA polymerase II transcription pause-release. PNUTS-PP1 also plays a role in the control of chromatin structure and cell cycle progression during the transition from mitosis into interphase. This is TOX high mobility group box family member 4 from Mus musculus (Mouse).